The chain runs to 234 residues: Coiled-coil domain-containing protein 194 (234 aa).

The first 42 residues, 1–42 (MAEPGPEPGRAWRVLALCGVAVFLAAAAAGGALVAWNLAASA), serve as a signal peptide directing secretion. 2 disordered regions span residues 44–67 (RGPR…PGVD) and 187–234 (VLEA…RARG). A coiled-coil region spans residues 66–163 (VDDLRRRLAE…TRRLDEALRR (98 aa)). Positions 187–196 (VLEAEMSPQR) are enriched in low complexity. Residues 197–217 (RVPRPRPRSGSRPRPSPRSRS) show a composition bias toward basic residues.

In Homo sapiens (Human), this protein is Coiled-coil domain-containing protein 194.